A 295-amino-acid polypeptide reads, in one-letter code: Probable peptidyl-prolyl cis-trans isomerase B (295 aa).

2 disordered regions span residues 105–128 and 274–295; these read SADKAAKPVKPPRAGKVPTDPATV and IASGGDDGPPATEVTIESLRLD. A PPIase cyclophilin-type domain is found at 126 to 294; the sequence is ATVSASMATN…TEVTIESLRL (169 aa).

The protein belongs to the cyclophilin-type PPIase family.

The catalysed reaction is [protein]-peptidylproline (omega=180) = [protein]-peptidylproline (omega=0). In terms of biological role, PPIases accelerate the folding of proteins. It catalyzes the cis-trans isomerization of proline imidic peptide bonds in oligopeptides. The sequence is that of Probable peptidyl-prolyl cis-trans isomerase B (ppiB) from Mycobacterium leprae (strain TN).